Consider the following 292-residue polypeptide: NAD kinase (292 aa).

Asp-73 acts as the Proton acceptor in catalysis. NAD(+) is bound by residues 73–74 (DG), 147–148 (NE), His-158, Arg-175, Asp-177, 188–193 (TAYSLS), and Gln-247.

The protein belongs to the NAD kinase family. Requires a divalent metal cation as cofactor.

It localises to the cytoplasm. The enzyme catalyses NAD(+) + ATP = ADP + NADP(+) + H(+). In terms of biological role, involved in the regulation of the intracellular balance of NAD and NADP, and is a key enzyme in the biosynthesis of NADP. Catalyzes specifically the phosphorylation on 2'-hydroxyl of the adenosine moiety of NAD to yield NADP. The protein is NAD kinase of Salmonella choleraesuis (strain SC-B67).